Reading from the N-terminus, the 696-residue chain is Elongation factor G (696 aa).

Residues 8–282 enclose the tr-type G domain; it reads KDYRNIGIMA…AVVDYLPSPL (275 aa). GTP is bound by residues 17–24, 81–85, and 135–138; these read AHIDAGKT, DTPGH, and NKMD.

It belongs to the TRAFAC class translation factor GTPase superfamily. Classic translation factor GTPase family. EF-G/EF-2 subfamily.

The protein resides in the cytoplasm. Its function is as follows. Catalyzes the GTP-dependent ribosomal translocation step during translation elongation. During this step, the ribosome changes from the pre-translocational (PRE) to the post-translocational (POST) state as the newly formed A-site-bound peptidyl-tRNA and P-site-bound deacylated tRNA move to the P and E sites, respectively. Catalyzes the coordinated movement of the two tRNA molecules, the mRNA and conformational changes in the ribosome. This is Elongation factor G from Mycoplasmopsis synoviae (strain 53) (Mycoplasma synoviae).